The following is a 146-amino-acid chain: Transcriptional regulator MraZ (146 aa).

2 consecutive SpoVT-AbrB domains span residues 4-46 (TVFR…SQTE) and 75-118 (TVKV…PEQR).

Belongs to the MraZ family. Forms oligomers.

The protein resides in the cytoplasm. Its subcellular location is the nucleoid. This is Transcriptional regulator MraZ from Mesomycoplasma hyopneumoniae (strain 232) (Mycoplasma hyopneumoniae).